We begin with the raw amino-acid sequence, 219 residues long: Peptidyl-tRNA hydrolase (219 aa).

Tyrosine 26 provides a ligand contact to tRNA. The Proton acceptor role is filled by histidine 31. Residues tyrosine 78, asparagine 80, and asparagine 126 each contribute to the tRNA site.

Belongs to the PTH family. In terms of assembly, monomer.

Its subcellular location is the cytoplasm. The enzyme catalyses an N-acyl-L-alpha-aminoacyl-tRNA + H2O = an N-acyl-L-amino acid + a tRNA + H(+). Functionally, hydrolyzes ribosome-free peptidyl-tRNAs (with 1 or more amino acids incorporated), which drop off the ribosome during protein synthesis, or as a result of ribosome stalling. Its function is as follows. Catalyzes the release of premature peptidyl moieties from peptidyl-tRNA molecules trapped in stalled 50S ribosomal subunits, and thus maintains levels of free tRNAs and 50S ribosomes. The polypeptide is Peptidyl-tRNA hydrolase (Trichodesmium erythraeum (strain IMS101)).